The following is a 2430-amino-acid chain: DNA-directed RNA polymerase subunit beta'' (2430 aa).

4 residues coordinate Zn(2+): cysteine 336, cysteine 455, cysteine 462, and cysteine 465.

The protein belongs to the RNA polymerase beta' chain family. RpoC2 subfamily. In plastids the minimal PEP RNA polymerase catalytic core is composed of four subunits: alpha, beta, beta', and beta''. When a (nuclear-encoded) sigma factor is associated with the core the holoenzyme is formed, which can initiate transcription. Requires Zn(2+) as cofactor.

It localises to the plastid. It is found in the chloroplast. The enzyme catalyses RNA(n) + a ribonucleoside 5'-triphosphate = RNA(n+1) + diphosphate. Its function is as follows. DNA-dependent RNA polymerase catalyzes the transcription of DNA into RNA using the four ribonucleoside triphosphates as substrates. The polypeptide is DNA-directed RNA polymerase subunit beta'' (Stigeoclonium helveticum (Green alga)).